The chain runs to 197 residues: Guanylate kinase (197 aa).

Residues 9-188 (GRLVVFSAPS…AVEAVILAIS (180 aa)) form the Guanylate kinase-like domain. 16–23 (APSGTGKS) contributes to the ATP binding site.

This sequence belongs to the guanylate kinase family.

The protein localises to the cytoplasm. The enzyme catalyses GMP + ATP = GDP + ADP. Its function is as follows. Essential for recycling GMP and indirectly, cGMP. This is Guanylate kinase from Chlorobium luteolum (strain DSM 273 / BCRC 81028 / 2530) (Pelodictyon luteolum).